Here is a 57-residue protein sequence, read N- to C-terminus: High-potential iron-sulfur protein (57 aa).

C21, C24, C33, and C46 together coordinate [4Fe-4S] cluster.

This sequence belongs to the high-potential iron-sulfur protein (HiPIP) family. In terms of assembly, homodimer.

In terms of biological role, specific class of high-redox-potential 4Fe-4S ferredoxins. Functions in anaerobic electron transport in most purple and in some other photosynthetic bacteria and in at least one genus (Paracoccus) of halophilic, denitrifying bacteria. The protein is High-potential iron-sulfur protein (hip) of Rhodopila globiformis (Rhodopseudomonas globiformis).